The primary structure comprises 296 residues: Elongation factor Ts (296 aa).

Positions 82–85 are involved in Mg(2+) ion dislocation from EF-Tu; sequence TDFV.

Belongs to the EF-Ts family.

Its subcellular location is the cytoplasm. In terms of biological role, associates with the EF-Tu.GDP complex and induces the exchange of GDP to GTP. It remains bound to the aminoacyl-tRNA.EF-Tu.GTP complex up to the GTP hydrolysis stage on the ribosome. This is Elongation factor Ts from Aromatoleum aromaticum (strain DSM 19018 / LMG 30748 / EbN1) (Azoarcus sp. (strain EbN1)).